We begin with the raw amino-acid sequence, 550 residues long: Chaperonin GroEL (550 aa).

ATP-binding positions include 30 to 33 (TLGP), lysine 51, 87 to 91 (DGTTT), glycine 415, and aspartate 496.

It belongs to the chaperonin (HSP60) family. In terms of assembly, forms a cylinder of 14 subunits composed of two heptameric rings stacked back-to-back. Interacts with the co-chaperonin GroES.

It localises to the cytoplasm. It catalyses the reaction ATP + H2O + a folded polypeptide = ADP + phosphate + an unfolded polypeptide.. Its function is as follows. Together with its co-chaperonin GroES, plays an essential role in assisting protein folding. The GroEL-GroES system forms a nano-cage that allows encapsulation of the non-native substrate proteins and provides a physical environment optimized to promote and accelerate protein folding. The protein is Chaperonin GroEL of Rickettsia typhi (strain ATCC VR-144 / Wilmington).